Consider the following 316-residue polypeptide: Probable cell division protein WhiA (316 aa).

The segment at residues 275 to 309 is a DNA-binding region (H-T-H motif); the sequence is TLKELGEMVSGGKISKSGINHRLRKIDEIAEKLRA.

This sequence belongs to the WhiA family.

Involved in cell division and chromosome segregation. This chain is Probable cell division protein WhiA, found in Bacillus cereus (strain G9842).